A 175-amino-acid chain; its full sequence is ATP synthase subunit b (175 aa).

A helical membrane pass occupies residues L20 to W40.

The protein belongs to the ATPase B chain family. In terms of assembly, F-type ATPases have 2 components, F(1) - the catalytic core - and F(0) - the membrane proton channel. F(1) has five subunits: alpha(3), beta(3), gamma(1), delta(1), epsilon(1). F(0) has four main subunits: a(1), b(2) and c(10-14). The alpha and beta chains form an alternating ring which encloses part of the gamma chain. F(1) is attached to F(0) by a central stalk formed by the gamma and epsilon chains, while a peripheral stalk is formed by the delta and b chains.

It localises to the cell inner membrane. In terms of biological role, f(1)F(0) ATP synthase produces ATP from ADP in the presence of a proton or sodium gradient. F-type ATPases consist of two structural domains, F(1) containing the extramembraneous catalytic core and F(0) containing the membrane proton channel, linked together by a central stalk and a peripheral stalk. During catalysis, ATP synthesis in the catalytic domain of F(1) is coupled via a rotary mechanism of the central stalk subunits to proton translocation. Its function is as follows. Component of the F(0) channel, it forms part of the peripheral stalk, linking F(1) to F(0). This chain is ATP synthase subunit b, found in Pelodictyon phaeoclathratiforme (strain DSM 5477 / BU-1).